An 895-amino-acid polypeptide reads, in one-letter code: Stonin-2 (895 aa).

3 disordered regions span residues 15–119 (WVSF…PPHK), 145–222 (SESS…APPV), and 234–280 (EDNE…KSTL). Residues 64-73 (SHSEQDDSSE) are compositionally biased toward basic and acidic residues. The span at 145-193 (SESSWTTHSEDTSSPSVAPSYTDLQLINTEEQASGRASGTDSTDNSSSL) shows a compositional bias: polar residues. Positions 241 to 251 (PSPPVPSPKKP) are enriched in pro residues. The residue at position 253 (Thr253) is a Phosphothreonine. Residues Ser278 and Ser299 each carry the phosphoserine modification. Short sequence motifs (NPF) lie at residues 310 to 312 (NPF) and 326 to 328 (NPF). The interval 386–421 (QIDDPDPVGNTALPDDDPTASVELDAPSPASALSQP) is disordered. One can recognise an SHD domain in the interval 424-557 (GWPMMLRIPE…DLPVLSMDLS (134 aa)). The 308-residue stretch at 565 to 872 (EEEITVDVRD…AHYSYKVEIE (308 aa)) folds into the MHD domain. Position 759 is a phosphoserine (Ser759).

It belongs to the Stoned B family. Interacts with the second C2 domain of synaptotagmins SYT1 and SYT2. Interacts with EPS15, EPS15R and ITSN1. Interacts indirectly with the AP-2 adapter complex. Interacts with TOR1A and COPS4; the interaction controls STON2 protein stability. Post-translationally, phosphorylated in vitro by PKD. Neddylated; deneddylated via its interaction with the COP9 signalosome (CSN) complex through TOR1A and COPS4. In terms of processing, ubiquitinated; leading to its degradation.

The protein resides in the cytoplasm. It is found in the membrane. Its subcellular location is the synapse. It localises to the synaptosome. Its function is as follows. Adapter protein involved in endocytic machinery. Involved in the synaptic vesicle recycling. May facilitate clathrin-coated vesicle uncoating. This Mus musculus (Mouse) protein is Stonin-2 (Ston2).